A 422-amino-acid chain; its full sequence is L-2-hydroxyglutarate dehydrogenase (422 aa).

Belongs to the L2HGDH family. FAD is required as a cofactor.

Its subcellular location is the cell inner membrane. The enzyme catalyses (S)-2-hydroxyglutarate + a quinone = a quinol + 2-oxoglutarate. Its pathway is amino-acid degradation. Functionally, catalyzes the dehydrogenation of L-2-hydroxyglutarate (L2HG) to alpha-ketoglutarate and couples to the respiratory chain by feeding electrons from the reaction into the membrane quinone pool. Functions in a L-lysine degradation pathway that proceeds via cadaverine, glutarate and L-2-hydroxyglutarate. Also displays some oxidase activity in vitro on L-2-hydroxyglutarate with O2 as the electron acceptor, but this activity is most likely not physiological. This Escherichia coli O17:K52:H18 (strain UMN026 / ExPEC) protein is L-2-hydroxyglutarate dehydrogenase.